A 446-amino-acid polypeptide reads, in one-letter code: 5-hydroxytryptamine receptor 7 (446 aa).

Residues M1 to V84 are Extracellular-facing. Residues N5 and N67 are each glycosylated (N-linked (GlcNAc...) asparagine). A helical transmembrane segment spans residues I85 to F109. The Cytoplasmic segment spans residues V110–Y119. A helical transmembrane segment spans residues L120 to V141. The Extracellular segment spans residues T142–H153. Residues F154–I179 form a helical membrane-spanning segment. Cysteines 156 and 232 form a disulfide. D163 serves as a coordination point for serotonin. Topologically, residues D180–C199 are cytoplasmic. Residues M200–F220 form a helical membrane-spanning segment. Topologically, residues G221–F238 are extracellular. A helical transmembrane segment spans residues G239–Y261. The Cytoplasmic portion of the chain corresponds to R262–A327. A helical membrane pass occupies residues T328–F353. Residues I354–L364 are Extracellular-facing. Residues W365–F388 traverse the membrane as a helical segment. Residues N389–S446 lie on the Cytoplasmic side of the membrane. A lipid anchor (S-palmitoyl cysteine) is attached at C402.

It belongs to the G-protein coupled receptor 1 family.

It is found in the cell membrane. G-protein coupled receptor for 5-hydroxytryptamine (serotonin), a biogenic hormone that functions as a neurotransmitter, a hormone and a mitogen. Ligand binding causes a conformation change that triggers signaling via guanine nucleotide-binding proteins (G proteins) and modulates the activity of downstream effectors. HTR7 is coupled to G(s) G alpha proteins and mediates activation of adenylate cyclase activity. In Cavia porcellus (Guinea pig), this protein is 5-hydroxytryptamine receptor 7 (HTR7).